We begin with the raw amino-acid sequence, 707 residues long: DNA ligase (707 aa).

NAD(+) is bound by residues 36 to 40 (DADFD), 85 to 86 (SL), and Glu-116. The active-site N6-AMP-lysine intermediate is Lys-118. NAD(+) contacts are provided by Arg-139, Glu-180, Lys-298, and Lys-322. Zn(2+) contacts are provided by Cys-416, Cys-419, Cys-434, and Cys-440. The BRCT domain maps to 613-707 (AASSKIAGRS…STHVDPERMV (95 aa)).

The protein belongs to the NAD-dependent DNA ligase family. LigA subfamily. The cofactor is Mg(2+). Requires Mn(2+) as cofactor.

The enzyme catalyses NAD(+) + (deoxyribonucleotide)n-3'-hydroxyl + 5'-phospho-(deoxyribonucleotide)m = (deoxyribonucleotide)n+m + AMP + beta-nicotinamide D-nucleotide.. Its function is as follows. DNA ligase that catalyzes the formation of phosphodiester linkages between 5'-phosphoryl and 3'-hydroxyl groups in double-stranded DNA using NAD as a coenzyme and as the energy source for the reaction. It is essential for DNA replication and repair of damaged DNA. This chain is DNA ligase, found in Nitrosospira multiformis (strain ATCC 25196 / NCIMB 11849 / C 71).